A 799-amino-acid polypeptide reads, in one-letter code: ATP-dependent DNA helicase Hel308 (799 aa).

ATP is bound by residues glutamine 29 and 47–54; that span reads IPTASGKT. The region spanning 34–200 is the Helicase ATP-binding domain; it reads EAGVTEGENL…WLDAGLVDSD (167 aa). The short motif at 145–148 is the DEAH box element; the sequence is DEVH. The region spanning 234 to 435 is the Helicase C-terminal domain; that stretch reads QTAAIVRDTL…EPALRTHILA (202 aa). Disordered stretches follow at residues 522–566 and 750–799; these read RGAS…DRDP and NVLE…LGDF. Over residues 553 to 566 the composition is skewed to acidic residues; it reads LAEDADESDADRDP.

The protein belongs to the helicase family. Hel308 subfamily. In terms of assembly, monomer.

It carries out the reaction Couples ATP hydrolysis with the unwinding of duplex DNA by translocating in the 3'-5' direction.. The catalysed reaction is ATP + H2O = ADP + phosphate + H(+). Its function is as follows. DNA-dependent ATPase and 3'-5' DNA helicase that may be involved in repair of stalled replication forks. This chain is ATP-dependent DNA helicase Hel308, found in Haloarcula marismortui (strain ATCC 43049 / DSM 3752 / JCM 8966 / VKM B-1809) (Halobacterium marismortui).